Reading from the N-terminus, the 591-residue chain is Aspartate--tRNA(Asp/Asn) ligase (591 aa).

An L-aspartate-binding site is contributed by Glu-175. The tract at residues 199-202 is aspartate; the sequence is QQFK. L-aspartate is bound by residues Arg-221 and His-453. 221-223 contacts ATP; the sequence is RDE. Glu-486 provides a ligand contact to ATP. Residue Arg-493 participates in L-aspartate binding. 538 to 541 serves as a coordination point for ATP; sequence GIDR.

The protein belongs to the class-II aminoacyl-tRNA synthetase family. Type 1 subfamily. In terms of assembly, homodimer.

The protein localises to the cytoplasm. It catalyses the reaction tRNA(Asx) + L-aspartate + ATP = L-aspartyl-tRNA(Asx) + AMP + diphosphate. In terms of biological role, aspartyl-tRNA synthetase with relaxed tRNA specificity since it is able to aspartylate not only its cognate tRNA(Asp) but also tRNA(Asn). Reaction proceeds in two steps: L-aspartate is first activated by ATP to form Asp-AMP and then transferred to the acceptor end of tRNA(Asp/Asn). In Jannaschia sp. (strain CCS1), this protein is Aspartate--tRNA(Asp/Asn) ligase.